The following is a 238-amino-acid chain: 2-C-methyl-D-erythritol 4-phosphate cytidylyltransferase (238 aa).

It belongs to the IspD/TarI cytidylyltransferase family. IspD subfamily.

The catalysed reaction is 2-C-methyl-D-erythritol 4-phosphate + CTP + H(+) = 4-CDP-2-C-methyl-D-erythritol + diphosphate. It functions in the pathway isoprenoid biosynthesis; isopentenyl diphosphate biosynthesis via DXP pathway; isopentenyl diphosphate from 1-deoxy-D-xylulose 5-phosphate: step 2/6. Its function is as follows. Catalyzes the formation of 4-diphosphocytidyl-2-C-methyl-D-erythritol from CTP and 2-C-methyl-D-erythritol 4-phosphate (MEP). The sequence is that of 2-C-methyl-D-erythritol 4-phosphate cytidylyltransferase from Pelotomaculum thermopropionicum (strain DSM 13744 / JCM 10971 / SI).